The primary structure comprises 732 residues: Catalase-peroxidase (732 aa).

The tract at residues 1 to 26 is disordered; sequence MDAKTDDQGGKCPFPHGGGSRGHRNR. Residues 97-219 constitute a cross-link (tryptophyl-tyrosyl-methioninium (Trp-Tyr) (with M-245)); sequence WHSAGTYRTT…LGAVQMGLIY (123 aa). H98 functions as the Proton acceptor in the catalytic mechanism. A cross-link (tryptophyl-tyrosyl-methioninium (Tyr-Met) (with W-97)) is located at residues 219 to 245; it reads YVNPEGPNGNPDPVAAAKDIRETFARM. H260 serves as a coordination point for heme b.

It belongs to the peroxidase family. Peroxidase/catalase subfamily. In terms of assembly, homodimer or homotetramer. Heme b serves as cofactor. Post-translationally, formation of the three residue Trp-Tyr-Met cross-link is important for the catalase, but not the peroxidase activity of the enzyme.

It catalyses the reaction H2O2 + AH2 = A + 2 H2O. It carries out the reaction 2 H2O2 = O2 + 2 H2O. In terms of biological role, bifunctional enzyme with both catalase and broad-spectrum peroxidase activity. This is Catalase-peroxidase from Rhodopseudomonas palustris (strain BisB5).